The following is a 369-amino-acid chain: Core-capsid bridging protein (369 aa).

Residues 15–50 form a disordered region; it reads APEIYGPPKKEEQDYKPRKLKRVKKKKKDDDDDELD. Basic and acidic residues predominate over residues 22 to 31; sequence PKKEEQDYKP. A compositionally biased stretch (basic residues) spans 32–41; the sequence is RKLKRVKKKK. A Phosphothreonine; by host modification is found at Thr-85. Ser-166 is subject to Phosphoserine; by host. The interval 307–342 is disordered; the sequence is PGYRGYTYRPRRRATTRRRTTTGTRRRRRRRQPVLA. Residues 315–338 show a composition bias toward basic residues; it reads RPRRRATTRRRTTTGTRRRRRRRQ.

This sequence belongs to the adenoviridae core-capsid bridging protein family. Monomer. Homodimer. Exists in equilibrium between monomers and dimers in solution. Interacts with the histone-like nucleoprotein; this interactions bridge the virus core to the capsid. Interacts with core protein X; this interactions bridge the virus core to the capsid. Interacts with the endosome lysis protein VI; this interactions bridge the virus core to the capsid. Interacts with the peripentonal hexons. Interacts with host NPM1; this interaction might play a role in virus assembly.

The protein resides in the virion. The protein localises to the host nucleus. It localises to the host nucleolus. Functionally, associates loosely with the viral DNA to form an outer shell around the nucleoprotein-DNA complex and links it with the capsid by binding the endosome lysis protein. Dissociates from the viral genome during entry. Might be involved in nuclear capsid assembly of the viral particles through its association with NPM1/nucleophosmin. The chain is Core-capsid bridging protein from Homo sapiens (Human).